Reading from the N-terminus, the 130-residue chain is Small ribosomal subunit protein uS11 (130 aa).

Belongs to the universal ribosomal protein uS11 family. As to quaternary structure, part of the 30S ribosomal subunit.

Functionally, located on the platform of the 30S subunit. The polypeptide is Small ribosomal subunit protein uS11 (Ignicoccus hospitalis (strain KIN4/I / DSM 18386 / JCM 14125)).